The sequence spans 505 residues: MVSIRPDEISAILKQQISDYDKSVSVSNVGTVLQIGDGIARVYGLEQVMAGELVEFEDGTEGIALNLEDDNVGAVLMGEGVGIQEGSTVKATGKIASVPVSDEMLGRVVTPLGQPMDGKGDIPSTESRLIESIAPGIIKRKSVHEPLQTGITSIDSMIPIGRGQRELIIGDRQTGKTAIAIDTIINQKGEDVVCVYVAVGQKAASVANVVEVLREKGALDYTVIVAASASDPAALQYLAPYTGAAIAESFMYKGKATLVIYDDLTKQAQAYRQMSLLLRRPPGREAYPGDVFYLHSRLLERAAKLSDAMGSGSMTALPIIETQAGDVSAYIPTNVISITDGQIFLSSDLFNSGLRPAINVGISVSRVGGAAQTKAIKKIAGTLKLELAQFDELAAFSQFASDLDEATQKQLGRGKRLRELLKQPQFAPLNLAEQVAIVYAGVKGLIDEVPEDQVTQFSRELRDYLKTNKPEYITKVQTEKVLNEDAETILKAAINEVKSSMLASA.

170-177 (GDRQTGKT) is a binding site for ATP.

This sequence belongs to the ATPase alpha/beta chains family. As to quaternary structure, F-type ATPases have 2 components, CF(1) - the catalytic core - and CF(0) - the membrane proton channel. CF(1) has five subunits: alpha(3), beta(3), gamma(1), delta(1), epsilon(1). CF(0) has four main subunits: a(1), b(1), b'(1) and c(9-12).

Its subcellular location is the cellular thylakoid membrane. The enzyme catalyses ATP + H2O + 4 H(+)(in) = ADP + phosphate + 5 H(+)(out). Produces ATP from ADP in the presence of a proton gradient across the membrane. The alpha chain is a regulatory subunit. The polypeptide is ATP synthase subunit alpha (Prochlorococcus marinus (strain MIT 9313)).